The sequence spans 269 residues: Thiazole synthase (269 aa).

Residue K109 is the Schiff-base intermediate with DXP of the active site. 1-deoxy-D-xylulose 5-phosphate-binding positions include G170, 196-197 (AG), and 218-219 (NT).

Belongs to the ThiG family. In terms of assembly, homotetramer. Forms heterodimers with either ThiH or ThiS.

Its subcellular location is the plastid. The protein localises to the chloroplast. The enzyme catalyses [ThiS sulfur-carrier protein]-C-terminal-Gly-aminoethanethioate + 2-iminoacetate + 1-deoxy-D-xylulose 5-phosphate = [ThiS sulfur-carrier protein]-C-terminal Gly-Gly + 2-[(2R,5Z)-2-carboxy-4-methylthiazol-5(2H)-ylidene]ethyl phosphate + 2 H2O + H(+). The protein operates within cofactor biosynthesis; thiamine diphosphate biosynthesis. In terms of biological role, catalyzes the rearrangement of 1-deoxy-D-xylulose 5-phosphate (DXP) to produce the thiazole phosphate moiety of thiamine. Sulfur is provided by the thiocarboxylate moiety of the carrier protein ThiS. In vitro, sulfur can be provided by H(2)S. This is Thiazole synthase from Thalassiosira pseudonana (Marine diatom).